The chain runs to 128 residues: uncharacterized protein (128 aa).

The disordered stretch occupies residues 24-43 (KRTQNNTEQASRAINSPLQS). The segment covering 26–43 (TQNNTEQASRAINSPLQS) has biased composition (polar residues).

This is an uncharacterized protein from Homo sapiens (Human).